A 207-amino-acid chain; its full sequence is Small ribosomal subunit protein uS4c (207 aa).

In terms of domain architecture, S4 RNA-binding spans 92–155; sequence MRLDNILFRL…TYQSILSKRI (64 aa).

This sequence belongs to the universal ribosomal protein uS4 family. As to quaternary structure, part of the 30S ribosomal subunit. Contacts protein S5. The interaction surface between S4 and S5 is involved in control of translational fidelity.

The protein localises to the plastid. It localises to the chloroplast. One of the primary rRNA binding proteins, it binds directly to 16S rRNA where it nucleates assembly of the body of the 30S subunit. Its function is as follows. With S5 and S12 plays an important role in translational accuracy. In Equisetum scirpoides (Dwarf-scouring rush), this protein is Small ribosomal subunit protein uS4c (rps4).